The primary structure comprises 439 residues: Damage-control phosphatase ARMT1 (439 aa).

A2 is modified (N-acetylalanine). S4 carries the post-translational modification Phosphoserine. The residue at position 40 (K40) is an N6-acetyllysine. Mn(2+) contacts are provided by D251 and N252. 251-252 (DN) serves as a coordination point for substrate. Residues E256 and D289 each coordinate S-adenosyl-L-methionine. D289 is a binding site for Mn(2+). Substrate is bound by residues 365-369 (DLNYR) and K402. Positions 399-402 (RTLK) match the Subfamily III RTxK motif motif.

This sequence belongs to the damage-control phosphatase family. Sugar phosphate phosphatase III subfamily. The cofactor is Mn(2+). Ni(2+) serves as cofactor. In terms of processing, automethylated.

It carries out the reaction beta-D-fructose 1-phosphate + H2O = D-fructose + phosphate. The catalysed reaction is beta-D-fructose 6-phosphate = dihydroxyacetone + D-glyceraldehyde 3-phosphate. The enzyme catalyses L-glutamyl-[protein] + S-adenosyl-L-methionine = [protein]-L-glutamate 5-O-methyl ester + S-adenosyl-L-homocysteine. In terms of biological role, metal-dependent phosphatase that shows phosphatase activity against several substrates, including fructose-1-phosphate and fructose-6-phosphate. Its preference for fructose-1-phosphate, a strong glycating agent that causes DNA damage rather than a canonical yeast metabolite, suggests a damage-control function in hexose phosphate metabolism. Has also been shown to have O-methyltransferase activity that methylates glutamate residues of target proteins to form gamma-glutamyl methyl ester residues. Possibly methylates PCNA, suggesting it is involved in the DNA damage response. This Rattus norvegicus (Rat) protein is Damage-control phosphatase ARMT1.